The chain runs to 59 residues: Dimethylamine corrinoid protein (59 aa).

The region spanning 1–59 is the B12-binding domain; the sequence is TLQGQKDVIELLKEEGLRDKIKVMVGGAPATQAWADKIGADCYAENASEAVAKAKELLA.

Belongs to the methylamine corrinoid protein family.

It participates in one-carbon metabolism; methanogenesis from dimethylamine. Functionally, acts as a methyl group carrier between MtbB and MtbA. The chain is Dimethylamine corrinoid protein (mtbC) from Methanosarcina thermophila.